The primary structure comprises 427 residues: Trigger factor (427 aa).

The region spanning 163–248 is the PPIase FKBP-type domain; that stretch reads GDTVVIDFVG…IHEVKTKEVP (86 aa).

The protein belongs to the FKBP-type PPIase family. Tig subfamily.

The protein resides in the cytoplasm. It carries out the reaction [protein]-peptidylproline (omega=180) = [protein]-peptidylproline (omega=0). Involved in protein export. Acts as a chaperone by maintaining the newly synthesized protein in an open conformation. Functions as a peptidyl-prolyl cis-trans isomerase. This is Trigger factor (tig) from Streptococcus pyogenes serotype M1.